Here is a 280-residue protein sequence, read N- to C-terminus: Probable cell division protein WhiA (280 aa).

Residues 246-279 (SLEQIAQFFERKYKVQITRSGIQHLNAKLKKLNQ) constitute a DNA-binding region (H-T-H motif).

This sequence belongs to the WhiA family.

Functionally, involved in cell division and chromosome segregation. This is Probable cell division protein WhiA from Mycoplasma pneumoniae (strain ATCC 29342 / M129 / Subtype 1) (Mycoplasmoides pneumoniae).